We begin with the raw amino-acid sequence, 272 residues long: D-aminoacyl-tRNA deacylase (272 aa).

This sequence belongs to the DtdA deacylase family. Monomer. The cofactor is Zn(2+).

It catalyses the reaction a D-aminoacyl-tRNA + H2O = a tRNA + a D-alpha-amino acid + H(+). It carries out the reaction glycyl-tRNA(Ala) + H2O = tRNA(Ala) + glycine + H(+). Functionally, D-aminoacyl-tRNA deacylase with broad substrate specificity. By recycling D-aminoacyl-tRNA to D-amino acids and free tRNA molecules, this enzyme counteracts the toxicity associated with the formation of D-aminoacyl-tRNA entities in vivo. This is D-aminoacyl-tRNA deacylase from Hyperthermus butylicus (strain DSM 5456 / JCM 9403 / PLM1-5).